Consider the following 232-residue polypeptide: Small ribosomal subunit protein uS3 (232 aa).

In terms of domain architecture, KH type-2 spans 39–107; it reads IRKFLKKELF…DVAINIKEEK (69 aa). The segment at 213–232 is disordered; sequence QPEPAEEKKGGRRPSRKRGE. A compositionally biased stretch (basic residues) spans 222–232; the sequence is GGRRPSRKRGE.

The protein belongs to the universal ribosomal protein uS3 family. As to quaternary structure, part of the 30S ribosomal subunit. Forms a tight complex with proteins S10 and S14.

In terms of biological role, binds the lower part of the 30S subunit head. Binds mRNA in the 70S ribosome, positioning it for translation. The chain is Small ribosomal subunit protein uS3 from Sulfurovum sp. (strain NBC37-1).